The chain runs to 341 residues: MLSPEALTTAVDAAQQAIALADTLDVLARVKTEHLGDRSPLALARQALAVLPKEQRAEAGKRVNAARNAAQRSYDERLATLRAERDAAVLVAEGIDVTLPSTRVPAGARHPIIMLAEHVADTFIAMGWELAEGPEVETEQFNFDALNFPADHPARGEQDTFYIAPEDSRQLLRTHTSPVQIRTLLARELPVYIISIGRTFRTDELDATHTPIFHQVEGLAVDRGLSMAHLRGTLDAFARAEFGPSARTRIRPHFFPFTEPSAEVDVWFANKIGGAAWVEWGGCGMVHPNVLRATGIDPDLYSGFAFGMGLERTLQFRNGIPDMRDMVEGDVRFSLPFGVGA.

Glu-259 contributes to the Mg(2+) binding site.

The protein belongs to the class-II aminoacyl-tRNA synthetase family. Phe-tRNA synthetase alpha subunit type 1 subfamily. As to quaternary structure, tetramer of two alpha and two beta subunits. Requires Mg(2+) as cofactor.

The protein localises to the cytoplasm. It catalyses the reaction tRNA(Phe) + L-phenylalanine + ATP = L-phenylalanyl-tRNA(Phe) + AMP + diphosphate + H(+). The sequence is that of Phenylalanine--tRNA ligase alpha subunit from Mycobacterium tuberculosis (strain ATCC 25177 / H37Ra).